The chain runs to 223 residues: Putative C-type lectin protein 51 (223 aa).

The first 31 residues, 1–31, serve as a signal peptide directing secretion; sequence MAKRINFTSCLIFTSCFTAFIVSLCLLVSSC. The C-type lectin domain maps to 111 to 218; that stretch reads QEGRCYHYSR…CDTPRRCLCG (108 aa). Cys193 and Cys209 are oxidised to a cystine.

The polypeptide is Putative C-type lectin protein 51 (51) (Equine herpesvirus 2 (strain 86/87) (EHV-2)).